The primary structure comprises 817 residues: General transcription factor 3C polypeptide 4 (817 aa).

An N-acetylmethionine modification is found at methionine 1. Residues 1–40 are disordered; sequence MSEADQALVGPKADEPSPPAEEKDEGGGKEAAADAAPGPS. Lysine 221 is covalently cross-linked (Glycyl lysine isopeptide (Lys-Gly) (interchain with G-Cter in SUMO2)). Phosphoserine is present on residues serine 600 and serine 607. The segment at 603–658 is disordered; the sequence is LLVDSPGMGDGEDEQQEEGTSKQGTKAGLQEKSKEGDTEETPEDSLTAGGDTGGRE. Residue lysine 624 forms a Glycyl lysine isopeptide (Lys-Gly) (interchain with G-Cter in SUMO2) linkage. Residue serine 647 is modified to Phosphoserine.

This sequence belongs to the TFIIIC subunit 4 family. As to quaternary structure, part of the TFIIIC subcomplex TFIIIC2, consisting of six subunits, GTF3C1, GTF3C2, GTF3C3, GTF3C4, GTF3C5 and GTF3C6. Interacts with BRF1, GTF3C1, GTF3C2, GTF3C5, GTF3C6, POLR3C and POLR3F.

The protein resides in the nucleus. The enzyme catalyses L-lysyl-[protein] + acetyl-CoA = N(6)-acetyl-L-lysyl-[protein] + CoA + H(+). Functionally, essential for RNA polymerase III to make a number of small nuclear and cytoplasmic RNAs, including 5S RNA, tRNA, and adenovirus-associated (VA) RNA of both cellular and viral origin. Has histone acetyltransferase activity (HAT) with unique specificity for free and nucleosomal H3. May cooperate with GTF3C5 in facilitating the recruitment of TFIIIB and RNA polymerase through direct interactions with BRF1, POLR3C and POLR3F. May be localized close to the A box. This is General transcription factor 3C polypeptide 4 (Gtf3c4) from Mus musculus (Mouse).